Consider the following 314-residue polypeptide: N-myc-interactor (314 aa).

The segment at 1–24 (MDADKDNIKQACDERSAEMDDMRG) is disordered. Position 16 is a phosphoserine (Ser16). A coiled-coil region spans residues 31–65 (VHEIMSENKELDEEIKKLEAELQSDAREFQIKENV). 2 NID domains span residues 104–193 (GQAL…GEVE) and 202–293 (RSAV…EVEV).

This sequence belongs to the NMI family. As to quaternary structure, interacts with MYCN and MYC, as well as with other transcription factors with a Zip, HLH or a HLH-Zip motif. Interacts with all STAT proteins except STAT2. Interacts with IRF7, the interaction is direct and leads to the inhibition of IRF7-mediated type I IFN production. Interacts (via coiled-coil domain) with TRIM21 (via the SPRY domain); the interaction leads to 'Lys-63'-linked ubiquitination of NMI. Interacts with IFI35; the interaction is direct and is facilitated by TRIM21. Interacts with TLR4; the interaction is direct and leads to NF-kappa-B activation. In terms of processing, may be ubiquitinated. Expressed in macrophages.

It is found in the cytoplasm. It localises to the nucleus. The protein resides in the secreted. Its function is as follows. Acts as a signaling pathway regulator involved in innate immune system response. In response to interleukin 2/IL2 and interferon IFN-gamma/IFNG, interacts with signal transducer and activator of transcription/STAT which activate the transcription of downstream genes involved in a multitude of signals for development and homeostasis. Enhances the recruitment of CBP/p300 coactivators to STAT1 and STAT5, resulting in increased STAT1- and STAT5-dependent transcription. In response to interferon IFN-alpha, associates in a complex with transcriptional regulator IFI35 to regulate immune response; the complex formation prevents proteasome-mediated degradation of IFI35. In complex with IFI35, negatively regulates nuclear factor NF-kappa-B signaling by inhibiting the nuclear translocation, activation and transcription of NF-kappa-B subunit p65/RELA, resulting in the inhibition of endothelial cell proliferation, migration and re-endothelialization of injured arteries. Negatively regulates virus-triggered type I interferon/IFN production by inducing proteosome-dependent degradation of IRF7, a transcriptional regulator of type I IFN, thereby interfering with cellular antiviral responses. Beside its role as an intracellular signaling pathway regulator, also functions extracellularly as damage-associated molecular patterns (DAMPs) to promote inflammation, when actively released by macrophage to the extracellular space during cell injury or pathogen invasion. Macrophage-secreted NMI activates NF-kappa-B signaling in adjacent macrophages through Toll-like receptor 4/TLR4 binding and activation, thereby inducing NF-kappa-B translocation from the cytoplasm into the nucleus which promotes the release of pro-inflammatory cytokines. This Mus musculus (Mouse) protein is N-myc-interactor.